An 89-amino-acid polypeptide reads, in one-letter code: Small ribosomal subunit protein uS15 (89 aa).

The protein belongs to the universal ribosomal protein uS15 family. In terms of assembly, part of the 30S ribosomal subunit. Forms a bridge to the 50S subunit in the 70S ribosome, contacting the 23S rRNA.

In terms of biological role, one of the primary rRNA binding proteins, it binds directly to 16S rRNA where it helps nucleate assembly of the platform of the 30S subunit by binding and bridging several RNA helices of the 16S rRNA. Functionally, forms an intersubunit bridge (bridge B4) with the 23S rRNA of the 50S subunit in the ribosome. The chain is Small ribosomal subunit protein uS15 from Lactococcus lactis subsp. lactis (strain IL1403) (Streptococcus lactis).